The following is a 460-amino-acid chain: Proline--tRNA ligase (460 aa).

The protein belongs to the class-II aminoacyl-tRNA synthetase family. ProS type 3 subfamily. In terms of assembly, homodimer.

The protein resides in the cytoplasm. The catalysed reaction is tRNA(Pro) + L-proline + ATP = L-prolyl-tRNA(Pro) + AMP + diphosphate. Catalyzes the attachment of proline to tRNA(Pro) in a two-step reaction: proline is first activated by ATP to form Pro-AMP and then transferred to the acceptor end of tRNA(Pro). The protein is Proline--tRNA ligase of Methanococcus maripaludis (strain C6 / ATCC BAA-1332).